Here is a 143-residue protein sequence, read N- to C-terminus: Ribosomal RNA large subunit methyltransferase H (143 aa).

Leu68 and Gly95 together coordinate S-adenosyl-L-methionine.

This sequence belongs to the RNA methyltransferase RlmH family. Homodimer.

It localises to the cytoplasm. It carries out the reaction pseudouridine(1915) in 23S rRNA + S-adenosyl-L-methionine = N(3)-methylpseudouridine(1915) in 23S rRNA + S-adenosyl-L-homocysteine + H(+). Its function is as follows. Specifically methylates the pseudouridine at position 1915 (m3Psi1915) in 23S rRNA. This chain is Ribosomal RNA large subunit methyltransferase H, found in Mycoplasma mobile (strain ATCC 43663 / 163K / NCTC 11711) (Mesomycoplasma mobile).